The following is a 569-amino-acid chain: Endonuclease/exonuclease/phosphatase family domain-containing protein 1 (569 aa).

The tract at residues 1 to 20 (MGSTLGCHRSIPRDPSDLSH) is disordered. G2 carries N-myristoyl glycine lipidation. Residues 11–20 (IPRDPSDLSH) show a composition bias toward basic and acidic residues. Residues S16, S21, and S25 each carry the phosphoserine modification. A HhH domain is found at 38-67 (ERLNINTATEEELMTLPGVTRAVARSIVEY). Phosphoserine occurs at positions 106, 110, 160, and 173. The tract at residues 200-224 (SRPPSTHTNGGLTFTAKPHPSPTSL) is disordered. Over residues 202–211 (PPSTHTNGGL) the composition is skewed to polar residues. A Phosphothreonine modification is found at T265. Positions 548–569 (EVPRNGNGVTLEPSEANVKHER) are disordered.

The polypeptide is Endonuclease/exonuclease/phosphatase family domain-containing protein 1 (Eepd1) (Rattus norvegicus (Rat)).